Consider the following 107-residue polypeptide: Integration host factor subunit beta (107 aa).

Residues 56-107 (RPSRVGRNPKSGEKVLVPEKHVPHFKPGKELRERVDRNAGEPLKADAADDDL) are disordered. Residues 65 to 107 (KSGEKVLVPEKHVPHFKPGKELRERVDRNAGEPLKADAADDDL) show a composition bias toward basic and acidic residues.

Belongs to the bacterial histone-like protein family. In terms of assembly, heterodimer of an alpha and a beta chain.

Functionally, this protein is one of the two subunits of integration host factor, a specific DNA-binding protein that functions in genetic recombination as well as in transcriptional and translational control. This is Integration host factor subunit beta from Paraburkholderia phymatum (strain DSM 17167 / CIP 108236 / LMG 21445 / STM815) (Burkholderia phymatum).